A 240-amino-acid chain; its full sequence is Lipoprotein-releasing system ATP-binding protein LolD (240 aa).

One can recognise an ABC transporter domain in the interval 15–240; sequence IRAESLGKTY…GLRELTSAEV (226 aa). 51–58 provides a ligand contact to ATP; the sequence is GASGAGKS.

This sequence belongs to the ABC transporter superfamily. Lipoprotein translocase (TC 3.A.1.125) family. As to quaternary structure, the complex is composed of two ATP-binding proteins (LolD) and two transmembrane proteins (LolC and LolE).

The protein resides in the cell inner membrane. Functionally, part of the ABC transporter complex LolCDE involved in the translocation of mature outer membrane-directed lipoproteins, from the inner membrane to the periplasmic chaperone, LolA. Responsible for the formation of the LolA-lipoprotein complex in an ATP-dependent manner. In Xylella fastidiosa (strain Temecula1 / ATCC 700964), this protein is Lipoprotein-releasing system ATP-binding protein LolD.